A 1078-amino-acid chain; its full sequence is Nonribosomal peptide synthetase aneB (1078 aa).

The tract at residues 20 to 417 (FQQNVLDRPD…HGRKDTQVKI (398 aa)) is adenylation. Residues 559-635 (MPTTPLERQM…TLCQHVSVRP (77 aa)) enclose the Carrier domain. Position 596 is an O-(pantetheine 4'-phosphoryl)serine (S596). Residues 699 to 1013 (NYTLRLDVKL…HEMGYYGPVT (315 aa)) are condensation.

This sequence belongs to the NRP synthetase family.

It carries out the reaction holo-[peptidyl-carrier protein] + L-proline + ATP = L-prolyl-[peptidyl-carrier protein] + AMP + diphosphate. It participates in secondary metabolite biosynthesis. Its function is as follows. Nonribosomal peptide synthetase; part of the gene cluster that mediates the biosynthesis of aculenes, a unique type of norsesquiterpenes that contain a nordaucane skeleton linked to an L-proline moiety and are of mixed biosynthetic origin. The pathway begins with the synthesis of dauca-4,7-diene by the terpene cyclase aneC using farnesyl pyrophosphate (FPP) as substrate. The cytochrome P450 monooxygenase aneF then performs the initial oxidation at C-12 of dauca-4,7-diene to yield asperaculane D. Asperaculane D is substrate of the cytochrome P450 monooxygenase aneD for C-10 hydroxylation to yield asperaculane E. The cytochrome P450 monooxygenase aneG then converts asperaculane E into aculene D via C-2 oxidation. The monomodular nonribosomal peptide synthase aneB adenylates L-proline and the thiohydrolase aneE transfers this activated L-proline derivative to aculenes D and C to produce respectively aculenes B and A. The dioxygenase aneA converts aculene D into aculene C, and aculene B into aculene A by introducing the 5,6-alkene moiety. Asperculanes A, B, C and F, as well as 14-prolyl asperculane C, might be shunt products of the pathway. The sequence is that of Nonribosomal peptide synthetase aneB from Aspergillus aculeatus (strain ATCC 16872 / CBS 172.66 / WB 5094).